The chain runs to 174 residues: Guided entry of tail-anchored proteins factor 1 (174 aa).

Topologically, residues 1 to 8 (MSSAAADH) are lumenal. Residues 9 to 29 (WAWLLVLSFVFGCNVLRVLLP) traverse the membrane as a helical segment. Over 30–99 (SFSSFMSRVL…VKARTAQLAK (70 aa)) the chain is Cytoplasmic. Residues 39 to 94 (LQKDAEQESQMRAEIQDMKQELSTVNMMDEFARYARLERKINKMTDKLKTHVKART) adopt a coiled-coil conformation. Positions 39–97 (LQKDAEQESQMRAEIQDMKQELSTVNMMDEFARYARLERKINKMTDKLKTHVKARTAQL) are interaction with GET3/TRC40. The chain crosses the membrane as a helical span at residues 100–120 (IKWVISVAFYVLQAALMISLI). At 121-148 (WKYYSVPVAVVPSKWITPLDRLVAFPTR) the chain is on the lumenal side. A helical transmembrane segment spans residues 149–169 (VAGGVGITCWILVCNKVVAIV). Residues 170-174 (LHPFS) are Cytoplasmic-facing.

The protein belongs to the WRB/GET1 family. Component of the Golgi to ER traffic (GET) complex, which is composed of GET1/WRB, CAMLG/GET2 and GET3. Within the complex, GET1 and CAMLG form a heterotetramer which is stabilized by phosphatidylinositol binding and which binds to the GET3 homodimer. Interacts with CAMLG (via C-terminus). GET3 shows a higher affinity for CAMLG than for GET1.

It localises to the endoplasmic reticulum membrane. Its function is as follows. Required for the post-translational delivery of tail-anchored (TA) proteins to the endoplasmic reticulum. Together with CAMLG/GET2, acts as a membrane receptor for soluble GET3/TRC40, which recognizes and selectively binds the transmembrane domain of TA proteins in the cytosol. Required to ensure correct topology and ER insertion of CAMLG. The polypeptide is Guided entry of tail-anchored proteins factor 1 (Pongo abelii (Sumatran orangutan)).